Consider the following 203-residue polypeptide: Holliday junction branch migration complex subunit RuvA (203 aa).

Residues 1–63 (MIVSLRGTVE…EESQTLYGFT (63 aa)) are domain I. Residues 64–142 (DDASRRMFVL…GFNDGIPAAA (79 aa)) are domain II. Residues 143-150 (QPQLSIAV) are flexible linker. The tract at residues 150 to 203 (VDQAVQEQVLEALVGLGFSEKIALPVLSRVLRDSPELSKSQALRAALSELGTKN) is domain III.

This sequence belongs to the RuvA family. As to quaternary structure, homotetramer. Forms an RuvA(8)-RuvB(12)-Holliday junction (HJ) complex. HJ DNA is sandwiched between 2 RuvA tetramers; dsDNA enters through RuvA and exits via RuvB. An RuvB hexamer assembles on each DNA strand where it exits the tetramer. Each RuvB hexamer is contacted by two RuvA subunits (via domain III) on 2 adjacent RuvB subunits; this complex drives branch migration. In the full resolvosome a probable DNA-RuvA(4)-RuvB(12)-RuvC(2) complex forms which resolves the HJ.

It localises to the cytoplasm. Its function is as follows. The RuvA-RuvB-RuvC complex processes Holliday junction (HJ) DNA during genetic recombination and DNA repair, while the RuvA-RuvB complex plays an important role in the rescue of blocked DNA replication forks via replication fork reversal (RFR). RuvA specifically binds to HJ cruciform DNA, conferring on it an open structure. The RuvB hexamer acts as an ATP-dependent pump, pulling dsDNA into and through the RuvAB complex. HJ branch migration allows RuvC to scan DNA until it finds its consensus sequence, where it cleaves and resolves the cruciform DNA. This is Holliday junction branch migration complex subunit RuvA from Corynebacterium diphtheriae (strain ATCC 700971 / NCTC 13129 / Biotype gravis).